The following is a 245-amino-acid chain: 1-(5-phosphoribosyl)-5-[(5-phosphoribosylamino)methylideneamino] imidazole-4-carboxamide isomerase (245 aa).

Residue Asp-8 is the Proton acceptor of the active site. The active-site Proton donor is Asp-130.

The protein belongs to the HisA/HisF family.

The protein resides in the cytoplasm. The catalysed reaction is 1-(5-phospho-beta-D-ribosyl)-5-[(5-phospho-beta-D-ribosylamino)methylideneamino]imidazole-4-carboxamide = 5-[(5-phospho-1-deoxy-D-ribulos-1-ylimino)methylamino]-1-(5-phospho-beta-D-ribosyl)imidazole-4-carboxamide. Its pathway is amino-acid biosynthesis; L-histidine biosynthesis; L-histidine from 5-phospho-alpha-D-ribose 1-diphosphate: step 4/9. This chain is 1-(5-phosphoribosyl)-5-[(5-phosphoribosylamino)methylideneamino] imidazole-4-carboxamide isomerase, found in Azotobacter vinelandii (strain DJ / ATCC BAA-1303).